We begin with the raw amino-acid sequence, 330 residues long: Phenylalanine--tRNA ligase alpha subunit (330 aa).

E255 lines the Mg(2+) pocket.

Belongs to the class-II aminoacyl-tRNA synthetase family. Phe-tRNA synthetase alpha subunit type 1 subfamily. Tetramer of two alpha and two beta subunits. Mg(2+) serves as cofactor.

Its subcellular location is the cytoplasm. The catalysed reaction is tRNA(Phe) + L-phenylalanine + ATP = L-phenylalanyl-tRNA(Phe) + AMP + diphosphate + H(+). The sequence is that of Phenylalanine--tRNA ligase alpha subunit from Acinetobacter baumannii (strain AYE).